Reading from the N-terminus, the 293-residue chain is MWGPLIYALLGLAIVAAAFLFVRRSQAKEVVPVADDDDKENGAAADEVNPRQAGDQGHTDDEDGEEGNEGLKNFMYDENGKKLGVKKARKLQEKEERRRRNEEMAQAREQAKLLQHQEEEERKEREAEEAEDERQREAELEREREAQRQKELEEYNSLKSMFVVEESGELDVDHEAQAQSLLNEFVSFIKEKKVVQLEDLAAHFGLKTQDTIERIQQLEAEGRLTGLTDDRGKYIFISEEELSEVVKFIERRGRITIAELMDNSNRLISLSETDVEFPGDEPAPADVDETTTA.

Topologically, residues 1–6 (MWGPLI) are lumenal. The helical transmembrane segment at 7–27 (YALLGLAIVAAAFLFVRRSQA) threads the bilayer. Over 28-293 (KEVVPVADDD…PADVDETTTA (266 aa)) the chain is Cytoplasmic. Disordered stretches follow at residues 30 to 151 (VVPV…RQKE) and 273 to 293 (TDVEFPGDEPAPADVDETTTA). 2 stretches are compositionally biased toward basic and acidic residues: residues 90-126 (KLQEKEERRRRNEEMAQAREQAKLLQHQEEEERKERE) and 133-151 (ERQREAELEREREAQRQKE).

This sequence belongs to the DDRGK1 family.

It is found in the endoplasmic reticulum membrane. Functionally, substrate adapter for ufmylation, the covalent attachment of the ubiquitin-like modifier UFM1 to substrate proteins. This is DDRGK domain-containing protein 1 from Monosiga brevicollis (Choanoflagellate).